A 238-amino-acid polypeptide reads, in one-letter code: MIRLAVIRLAQGASRAQFLQKQAQIFTSAVVNAKKKADNKKKNPPAVFSNLEENAVVQETIKEIQRVEGLLVEELTRHFSLKVDIRQYEDVMVKLENGKDKPLSMIARVTLKSPLMIMINFQDNPSAIKAAKLAIQKSTLNVTPQQEGAVLYVNVPPMSKERREKMASDAKGRILNEYKKAINEIYSKSDKKSSNEFSTRPDEAKKTREALLNMKHAAEQRGGLLIEERRKQLLKQVV.

Belongs to the RRF family.

The protein resides in the mitochondrion. In terms of biological role, responsible for the release of ribosomes from messenger RNA at the termination of protein biosynthesis. May increase the efficiency of translation by recycling ribosomes from one round of translation to another. This Caenorhabditis elegans protein is Ribosome-recycling factor, mitochondrial.